The chain runs to 293 residues: Probable endonuclease 4 (293 aa).

Zn(2+) contacts are provided by His78, His118, Glu154, Asp188, His191, His225, Asp238, His240, and Glu270.

Belongs to the AP endonuclease 2 family. Zn(2+) is required as a cofactor.

The enzyme catalyses Endonucleolytic cleavage to 5'-phosphooligonucleotide end-products.. Its function is as follows. Endonuclease IV plays a role in DNA repair. It cleaves phosphodiester bonds at apurinic or apyrimidinic (AP) sites, generating a 3'-hydroxyl group and a 5'-terminal sugar phosphate. This Vibrio vulnificus (strain CMCP6) protein is Probable endonuclease 4.